We begin with the raw amino-acid sequence, 504 residues long: SPbeta prophage-derived uncharacterized protein YorI (504 aa).

The polypeptide is SPbeta prophage-derived uncharacterized protein YorI (yorI) (Bacillus subtilis (strain 168)).